A 93-amino-acid chain; its full sequence is Bublin coiled-coil protein (93 aa).

Disordered regions lie at residues 1 to 26 (MAGPNGDPHVLGGGTGDEGDEGGDTF) and 74 to 93 (QQQSKQLNTGADVQGSQPPA). Residues 17 to 26 (DEGDEGGDTF) show a composition bias toward acidic residues. The stretch at 59–80 (LKELLESNRQTRLEFQQQSKQL) forms a coiled coil.

The protein belongs to the UPF0184 (EST00098) family.

It is found in the cell junction. It localises to the cytoplasm. Its subcellular location is the cytoskeleton. Essential for intermediate filament organization in intestinal cells, interacts with intermediate filament and regulates intestinal lumen morphology. The protein is Bublin coiled-coil protein (BBLN) of Taeniopygia guttata (Zebra finch).